A 483-amino-acid polypeptide reads, in one-letter code: Glutamyl-tRNA(Gln) amidotransferase subunit A (483 aa).

Residues lysine 76 and serine 151 each act as charge relay system in the active site. The Acyl-ester intermediate role is filled by serine 175.

The protein belongs to the amidase family. GatA subfamily. Heterotrimer of A, B and C subunits.

It catalyses the reaction L-glutamyl-tRNA(Gln) + L-glutamine + ATP + H2O = L-glutaminyl-tRNA(Gln) + L-glutamate + ADP + phosphate + H(+). In terms of biological role, allows the formation of correctly charged Gln-tRNA(Gln) through the transamidation of misacylated Glu-tRNA(Gln) in organisms which lack glutaminyl-tRNA synthetase. The reaction takes place in the presence of glutamine and ATP through an activated gamma-phospho-Glu-tRNA(Gln). The chain is Glutamyl-tRNA(Gln) amidotransferase subunit A from Pseudomonas putida (strain ATCC 47054 / DSM 6125 / CFBP 8728 / NCIMB 11950 / KT2440).